Reading from the N-terminus, the 273-residue chain is MENRTNFFHLHLISDSTGETLISAGRAASAQFRSAQPIEHVYPLIRNRKQLLPVLQAIDDAPGIVLYTIVDRELANLIDERCVEMGVASVNVLEPVMNAFQIYLGAPSRRRVGAQHVMNAGYFARIEALNFTMDHDDGQMPDDYNDADVVIIGISRTSKTPTSIYLANRGIKTANIPIVYGVPLPESLLAATKPLIVCLIATTDRISQVRENRVLGTTQGFDREHYTDRATISEELKYARSLCARHGWPLIDVTRRSIEETAAAIVALRPKLR.

Gly-153 to Thr-160 contacts ADP.

The protein belongs to the pyruvate, phosphate/water dikinase regulatory protein family. PDRP subfamily.

The enzyme catalyses N(tele)-phospho-L-histidyl/L-threonyl-[pyruvate, phosphate dikinase] + ADP = N(tele)-phospho-L-histidyl/O-phospho-L-threonyl-[pyruvate, phosphate dikinase] + AMP + H(+). The catalysed reaction is N(tele)-phospho-L-histidyl/O-phospho-L-threonyl-[pyruvate, phosphate dikinase] + phosphate + H(+) = N(tele)-phospho-L-histidyl/L-threonyl-[pyruvate, phosphate dikinase] + diphosphate. In terms of biological role, bifunctional serine/threonine kinase and phosphorylase involved in the regulation of the pyruvate, phosphate dikinase (PPDK) by catalyzing its phosphorylation/dephosphorylation. The polypeptide is Putative pyruvate, phosphate dikinase regulatory protein (Rhizobium etli (strain ATCC 51251 / DSM 11541 / JCM 21823 / NBRC 15573 / CFN 42)).